A 1176-amino-acid chain; its full sequence is Translation initiation factor IF-2 (1176 aa).

Composition is skewed to low complexity over residues 32-44, 57-79, 94-166, and 193-235; these read IAAKSHSSSISDS, ASPSQPTAPAAKPAPAKPAAGKS, APVA…AAPS, and KPTP…VKPT. 2 disordered regions span residues 32–502 and 535–567; these read IAAK…QRQK and RPAKPKAQQRTAPKPVAAVRKRRKETARQRQRR. Pro residues predominate over residues 251 to 270; the sequence is APPPASTPRPAPSRPTPRPA. Composition is skewed to low complexity over residues 388–409 and 439–469; these read GRPGAPTRPGAPTRPGMPGGMR and NRPTEAAGTATPPVARPTAPSAPRRPGFRPG. Residues 478 to 492 are compositionally biased toward basic and acidic residues; that stretch reads GRPDWDDSAKLEALR. The span at 553 to 567 shows a compositional bias: basic residues; it reads VRKRRKETARQRQRR. Positions 668–840 constitute a tr-type G domain; sequence RRPPVVTVMG…LLLVTEVEDL (173 aa). Positions 677 to 684 are G1; sequence GHVDHGKT. Residue 677-684 coordinates GTP; that stretch reads GHVDHGKT. The tract at residues 702–706 is G2; the sequence is GITQH. Residues 727–730 form a G3 region; the sequence is DTPG. GTP-binding positions include 727–731 and 781–784; these read DTPGH and NKID. Residues 781–784 are G4; it reads NKID. The interval 817 to 819 is G5; the sequence is SAI.

Belongs to the TRAFAC class translation factor GTPase superfamily. Classic translation factor GTPase family. IF-2 subfamily.

It localises to the cytoplasm. Functionally, one of the essential components for the initiation of protein synthesis. Protects formylmethionyl-tRNA from spontaneous hydrolysis and promotes its binding to the 30S ribosomal subunits. Also involved in the hydrolysis of GTP during the formation of the 70S ribosomal complex. This Synechococcus sp. (strain CC9902) protein is Translation initiation factor IF-2.